Reading from the N-terminus, the 236-residue chain is Purine nucleoside phosphorylase DeoD-type (236 aa).

An a purine D-ribonucleoside-binding site is contributed by His-5. Phosphate is bound by residues Gly-21, Arg-25, Arg-44, and 88 to 91; that span reads RVGS. A purine D-ribonucleoside is bound by residues 180–182 and 204–205; these read EME and SD. Catalysis depends on Asp-205, which acts as the Proton donor.

This sequence belongs to the PNP/UDP phosphorylase family. As to quaternary structure, homohexamer; trimer of homodimers.

The catalysed reaction is a purine D-ribonucleoside + phosphate = a purine nucleobase + alpha-D-ribose 1-phosphate. It carries out the reaction a purine 2'-deoxy-D-ribonucleoside + phosphate = a purine nucleobase + 2-deoxy-alpha-D-ribose 1-phosphate. In terms of biological role, catalyzes the reversible phosphorolytic breakdown of the N-glycosidic bond in the beta-(deoxy)ribonucleoside molecules, with the formation of the corresponding free purine bases and pentose-1-phosphate. The protein is Purine nucleoside phosphorylase DeoD-type of Psychromonas ingrahamii (strain DSM 17664 / CCUG 51855 / 37).